The following is a 196-amino-acid chain: Acyl-homoserine-lactone synthase (196 aa).

Belongs to the autoinducer synthase family.

It catalyses the reaction a fatty acyl-[ACP] + S-adenosyl-L-methionine = an N-acyl-L-homoserine lactone + S-methyl-5'-thioadenosine + holo-[ACP] + H(+). Functionally, required for the synthesis of a yet unknown N-aceyl-homoserine lactone (N-aceyl-HSL), an autoinducer molecule which binds to PhzR and thus regulates phenazine production. The polypeptide is Acyl-homoserine-lactone synthase (phzI) (Pseudomonas chlororaphis (Pseudomonas aureofaciens)).